The following is a 381-amino-acid chain: Putative 2-heptyl-3-hydroxy-4(1H)-quinolone synthase AqdB1 (381 aa).

The protein belongs to the 3-hydroxybenzoate 6-hydroxylase family.

The enzyme catalyses 2-heptyl-4(1H)-quinolone + NADH + O2 + H(+) = 2-heptyl-3-hydroxy-4(1H)-quinolone + NAD(+) + H2O. Functionally, could be involved in the degradation of the Pseudomonas aeruginosa quorum sensing signal molecule HHQ (2-heptyl-4-quinolone) to anthranilic acid. May catalyze the hydroxylation of HHQ to PQS (2-heptyl-3-hydroxy-4-quinolone). This is Putative 2-heptyl-3-hydroxy-4(1H)-quinolone synthase AqdB1 from Rhodococcus erythropolis (Arthrobacter picolinophilus).